Reading from the N-terminus, the 26-residue chain is Metallothionein (26 aa).

A compositionally biased stretch (low complexity) spans 1 to 14 (MGDCGCSGASSCNC). A disordered region spans residues 1-26 (MGDCGCSGASSCNCGSGCSCSNCGSK). Positions 4, 6, 12, 14, 18, 20, and 23 each coordinate Cu(+). The span at 15-26 (GSGCSCSNCGSK) shows a compositional bias: cys residues.

It belongs to the metallothionein superfamily. Type 8 family.

The sequence is that of Metallothionein (cmt) from Neurospora crassa (strain ATCC 24698 / 74-OR23-1A / CBS 708.71 / DSM 1257 / FGSC 987).